The chain runs to 416 residues: MLRWLTAGESHGEALVGIVEGVPAGVELTTGMVQDALARRRLGYGRGARMKFEQDRVRILGGVRHGLTQGGPVAIEIANTEWPKWQDVMSSDPVDPQVLEGRARNAPLTRPRPGHADLTGMQKYGFDEARPVLERASARETATRVALGVVASQILAALGVRLVSHTTAVAEVAVPEGAPLPGPQDVPALDADPLRCFDAETSAAMVAAVDAAHKAGETLGGVVEVLAEGMPPGLGSYVHWDRRLDSRLAGALMGIQAIKGVEVGDGFRTAQRPGSLAHDETLRADGSVHRVSNRAGGIEGGMSTGDLLRVRAAMKPIATVPRSLHTVDVATGEPARAHHQRSDVCAVPAAGVVAEAMVALVLAEAALEKFGGDSVAELVRNRDSYLAGIPESLRTSPELADPAALAALDEVRGDLS.

Positions 40 and 46 each coordinate NADP(+). FMN contacts are provided by residues arginine 135–serine 137, glutamine 256–alanine 257, glycine 300, lysine 315–threonine 319, and arginine 341.

It belongs to the chorismate synthase family. In terms of assembly, homotetramer. The cofactor is FMNH2.

It carries out the reaction 5-O-(1-carboxyvinyl)-3-phosphoshikimate = chorismate + phosphate. It functions in the pathway metabolic intermediate biosynthesis; chorismate biosynthesis; chorismate from D-erythrose 4-phosphate and phosphoenolpyruvate: step 7/7. Catalyzes the anti-1,4-elimination of the C-3 phosphate and the C-6 proR hydrogen from 5-enolpyruvylshikimate-3-phosphate (EPSP) to yield chorismate, which is the branch point compound that serves as the starting substrate for the three terminal pathways of aromatic amino acid biosynthesis. This reaction introduces a second double bond into the aromatic ring system. The sequence is that of Chorismate synthase from Kocuria rhizophila (strain ATCC 9341 / DSM 348 / NBRC 103217 / DC2201).